Consider the following 183-residue polypeptide: MLLLVGLGNPGKRYAETRHNVGFMIIDAVARGFFFPEFCSKHDALVSIGNIGTHRVMLMKPLLYMNRSGTSVLSCTSMHKIAPEHITVFHDDVELQPGTIRVKLGGGSGGHNGLRSIDSAIGKAYWRVRFGVGRAELCNLSDYVLSDFENIAQVTDLVNSVAANLQMLLDGNAAGFVSKVTSV.

TRNA is bound at residue Tyr-14. His-19 serves as the catalytic Proton acceptor. Residues Tyr-64, Asn-66, and Asn-112 each coordinate tRNA.

This sequence belongs to the PTH family. Monomer.

Its subcellular location is the cytoplasm. The catalysed reaction is an N-acyl-L-alpha-aminoacyl-tRNA + H2O = an N-acyl-L-amino acid + a tRNA + H(+). Hydrolyzes ribosome-free peptidyl-tRNAs (with 1 or more amino acids incorporated), which drop off the ribosome during protein synthesis, or as a result of ribosome stalling. Functionally, catalyzes the release of premature peptidyl moieties from peptidyl-tRNA molecules trapped in stalled 50S ribosomal subunits, and thus maintains levels of free tRNAs and 50S ribosomes. The protein is Peptidyl-tRNA hydrolase of Anaplasma phagocytophilum (strain HZ).